The chain runs to 193 residues: dCTP deaminase (193 aa).

DCTP-binding positions include Arg-110–Arg-115, Asp-128, Val-136–Glu-138, Tyr-171, Lys-178, and Gln-182. The Proton donor/acceptor role is filled by Glu-138. The segment covering Pro-170–Asp-181 has biased composition (basic and acidic residues). A disordered region spans residues Pro-170 to Asp-193.

It belongs to the dCTP deaminase family. In terms of assembly, homotrimer.

It catalyses the reaction dCTP + H2O + H(+) = dUTP + NH4(+). Its pathway is pyrimidine metabolism; dUMP biosynthesis; dUMP from dCTP (dUTP route): step 1/2. In terms of biological role, catalyzes the deamination of dCTP to dUTP. In Enterobacter sp. (strain 638), this protein is dCTP deaminase.